A 419-amino-acid chain; its full sequence is N-acylglucosamine 2-epimerase (419 aa).

A leucine-zipper region spans residues 185–206 (LLSLVEQLGEEDEELTNMYAEL). At Ser418 the chain carries Phosphoserine.

It belongs to the N-acylglucosamine 2-epimerase family. Homodimer. Forms a heterodimer with renin and inhibits its activity.

The catalysed reaction is an N-acyl-D-glucosamine = an N-acyl-D-mannosamine. It functions in the pathway amino-sugar metabolism; N-acetylneuraminate degradation. Catalyzes the interconversion of N-acetylglucosamine to N-acetylmannosamine. Involved in the N-glycolylneuraminic acid (Neu5Gc) degradation pathway. The chain is N-acylglucosamine 2-epimerase (Renbp) from Mus musculus (Mouse).